A 103-amino-acid chain; its full sequence is Large ribosomal subunit protein bL21 (103 aa).

This sequence belongs to the bacterial ribosomal protein bL21 family. Part of the 50S ribosomal subunit. Contacts protein L20.

This protein binds to 23S rRNA in the presence of protein L20. This Shewanella pealeana (strain ATCC 700345 / ANG-SQ1) protein is Large ribosomal subunit protein bL21.